Reading from the N-terminus, the 365-residue chain is Putative F-box/kelch-repeat protein At3g16880 (365 aa).

The F-box domain maps to 1–47 (MTKMSKLPNDLLEEILSRSPLYSMRAIRLTCKKWNTLAKEESFTKKQ). Kelch repeat units follow at residues 98–149 (RVYH…TKKS) and 155–205 (ILSS…VKGN).

In Arabidopsis thaliana (Mouse-ear cress), this protein is Putative F-box/kelch-repeat protein At3g16880.